The primary structure comprises 915 residues: MNRFKVSKFRHTEARQPRREAWIGDIRAGTAPSCGNHIKASCSLIAFNSDHPGVLGIVPLESQGEDKRQVTHLGCHSDLVTDLDFSPFDDFLLATASADRTVKLWRLPLSGQALPSGPGLLLGPEDAQVEVLQFHPTADGVLLSAAGRAVKVWDATKQQPLTELATHGDLVQGAAWSRDGALLGTTCKDKQLRIFDPRAKPEAAQSTPAHENSRDGRLVWTGTQEYLVSTGFNQMREREVKLWDTRLFSAALTSLTLDTSPRSLVPLLDPDSGLLVLAGKGENQLYCYEAAPQQPALSPVTQCLLESVLRGAALVPRRALAVMGCEVLRVLQLSDTAIVPISYHVPRKTVEFHEDLFPDTAGCVPASDPHAWWAGSDQQVQRVSLHPARRAHPSFTSCLAPPAELTPATAQPAGTPEGFSSTPSSLTSPSTPSSLGPSLTSTSGIGTSPSQRSLQSLLGPSSKFRHAQGSVLHRDSHITNLKGLNLTTPGESDGFCANQLRVAVPLLSSGGQVAVLELRKPGRLPDTALPTLQNGVAVTDLAWDPFDPHRLAVAGEDARIRLWRVPPDGLQEVLTMPEAVLTGHTEKIYSLRFHPLAADVLASSSYDLTVRIWDLKVGAEQLRLQGHRDQIFGLAWSPDGQQLATVCKDGRLRIYEPRGSPEPLQEGPGPEGARGARVVWVCDGHYLLVSGFDSRSERQLLLYSAKALAGGPSAVLGLDVAPSTLLPSYDPDTGLVLLTGKGDTRVFLYELLPGAPFFLECNSFTSPDPHKGFILLPKTECDVREVEFARCLRLRQTSLEPVAFRLPRVRKEFFQDDVFPDTTVSWEPALSAEAWLGGANGTPRLLSLQPPGMTPVSQAPREAPARRAPSSVYLEEKSDQQKKEELLSAMVAKLGNREDPLPQDSFEGVDEDEWD.

WD repeat units lie at residues 75-115 (CHSD…QALP), 124-163 (PEDA…PLTE), 166-205 (THGD…EAAQ), and 209-253 (AHEN…AALT). The segment at 396-456 (TSCLAPPAEL…TSPSQRSLQS (61 aa)) is disordered. 2 stretches are compositionally biased toward low complexity: residues 399-413 (LAPP…AQPA) and 420-450 (SSTP…TSPS). Phosphoserine is present on residues serine 453 and serine 456. Lysine 463 participates in a covalent cross-link: Glycyl lysine isopeptide (Lys-Gly) (interchain with G-Cter in ubiquitin). WD repeat units lie at residues 533-573 (QNGV…LQEV), 583-623 (GHTE…EQLR), 626-665 (GHRD…EPLQ), and 719-759 (DVAP…PFFL). A disordered region spans residues 850–915 (PPGMTPVSQA…FEGVDEDEWD (66 aa)). Low complexity predominate over residues 859 to 869 (APREAPARRAP). The segment covering 874–886 (LEEKSDQQKKEEL) has biased composition (basic and acidic residues). Serine 905 carries the post-translational modification Phosphoserine.

The protein belongs to the WD repeat coronin family. Interacts with clathrin adapter AP1 complex. This interaction takes place at Golgi membranes and not AP1-positive endosomal membranes. Interacts (when ubiquitinated at Lys-463) with EPS15. The membrane-associated form is phosphorylated on tyrosine residues. Post-translationally, ubiquitinated via 'Lys-33'-linked ubiquitin chains by the BCR(KLHL20) E3 ubiquitin ligase complex: 'Lys-33'-linked ubiquitination promotes interaction with EPS15 and facilitates actin polymerization at the trans-Golgi network, thereby facilitating post-Golgi trafficking. Deubiquitinated by ZRANB1/TRABID.

It localises to the golgi apparatus membrane. The protein localises to the golgi apparatus. It is found in the trans-Golgi network. The protein resides in the cytoplasmic vesicle. Its subcellular location is the cytoplasm. It localises to the cytosol. In terms of biological role, F-actin regulator involved in anterograde Golgi to endosome transport: upon ubiquitination via 'Lys-33'-linked ubiquitin chains by the BCR(KLHL20) E3 ubiquitin ligase complex, interacts with EPS15 and localizes to the trans-Golgi network, where it promotes actin polymerization, thereby facilitating post-Golgi trafficking. May play a role in the maintenance of the Golgi apparatus morphology. The protein is Coronin-7 (CORO7) of Bos taurus (Bovine).